Here is a 1104-residue protein sequence, read N- to C-terminus: Collagenase ColA (1104 aa).

Residues 1–39 form the signal peptide; the sequence is MKKNLKRGELTKLKLVERWSATFTLAAFILFNSSFKVLA. The propeptide occupies 40–86; it reads ADKKVENSNNGQITREINADQISKTELNNEVATDNNRPLGPSIAPSR. Residues 87-761 form an S1 metalloprotease domain region; that stretch reads ARNNKIYTFD…YVYDVVFHGM (675 aa). Positions 93 to 367 are activator domain; it reads YTFDELNRMN…AANDLDLNFG (275 aa). The tract at residues 377–646 is catalytic subdomain; it reads DFNKIKADAR…MDSLLNNIDN (270 aa). Glutamate 477 contributes to the Ca(2+) binding site. Zn(2+) is bound at residue histidine 502. The active site involves glutamate 503. Zn(2+) is bound at residue histidine 506. Positions 510, 514, and 516 each coordinate Ca(2+). Position 534 (glutamate 534) interacts with Zn(2+). The helper subdomain stretch occupies residues 654–767; it reads DEYVNGHEAK…FHGMNTDTNT (114 aa). Residues 762–860 are S2 domain; it reads NTDTNTDVHV…KKIKVVEDKP (99 aa). 17 residues coordinate Ca(2+): asparagine 772, lysine 773, aspartate 800, aspartate 802, aspartate 841, glutamate 866, glutamate 868, asparagine 870, aspartate 894, aspartate 897, glutamate 993, glutamate 995, asparagine 997, leucine 1016, aspartate 1020, lysine 1022, and aspartate 1023. Residues 774-862 enclose the PKD domain; it reads EPKAVIKSDS…IKVVEDKPVE (89 aa). Positions 865-979 are S3a collagen-binding domain; that stretch reads NESEPNNDFE…TYTVNVKGNL (115 aa). Residues 992-1104 form an S3b collagen-binding domain region; that stretch reads KEVENNNDFD…GNYIVNLQNK (113 aa).

The protein belongs to the peptidase M9B family. Collagenase subfamily. Requires Ca(2+) as cofactor. Zn(2+) serves as cofactor.

Its subcellular location is the secreted. The catalysed reaction is Digestion of native collagen in the triple helical region at Xaa-|-Gly bonds. With synthetic peptides, a preference is shown for Gly at P3 and P1', Pro and Ala at P2 and P2', and hydroxyproline, Ala or Arg at P3'.. Functionally, clostridial collagenases are among the most efficient degraders of eukaryotic collagen known; saprophytes use collagen as a carbon source while pathogens additionally digest collagen to aid in host colonization. Has both tripeptidylcarboxypeptidase on Gly-X-Y and endopeptidase activities; the endopeptidase cuts within the triple helix region of collagen while tripeptidylcarboxypeptidase successively digests the exposed ends, thus clostridial collagenases can digest large sections of collagen. This Clostridium perfringens (strain 13 / Type A) protein is Collagenase ColA (colA).